The primary structure comprises 621 residues: MSHVLVNVAWPYANGPRHIGHVAGFGVPSDVYARYERMKGNDVLMVSGTDEHGTPILVEAEKEGLTAQELANRYNRVIAKDLCDLGLSYDLFTRTTTGNHEHVVQEMFKQCLENGYIYKGSQQVAISPSTGRTLPDRYIEGECPICHAEGARGDQCDACGNELDPDELINPVSKINGETPRFEQTEHYFLDLPALAEANKAWLETRKGWRTNVINFSLGLFKEVKPRAITRDIDWGIPVPVKGWIDNPNKKLYVWFDAVIGYLSASIEWARRQGDPEKWREWWNDPKCPAYYFMGKDNITFHSQIWPSEMLAYNGKGSKGGETGPMGPLNLPEQVVASEFMTMEGKKFSSSRGIVIYVKDILARYPVDAVRYYISVAGPESSDSDFTWAEFVRHNNEELASSWGNLVNRVANLINKNFGEIPPLDEDSMTNEDRGLLEEASAAFDVVGSSIETHHQKHALSEAMRVVGDINKYISATEPWKIKDDQARLGTVLHVAAQAVSDANHLLAPFLPHSAQKVWEALGGTGTFSPLPELKEVEDLDKPGFTYPIITGDYELGVNVHPWKSEAIEVGAVVPKPAPIFAKIPTEAVEEELARFDEALAARRAAEAERLAAEKAKLAAE.

Positions 11-21 (PYANGPRHIGH) match the 'HIGH' region motif. Zn(2+) is bound by residues Cys-143, Cys-146, Cys-156, and Cys-159. The 'KMSKS' region motif lies at 347–351 (KFSSS). Residue Ser-350 coordinates ATP.

It belongs to the class-I aminoacyl-tRNA synthetase family. MetG type 1 subfamily. As to quaternary structure, monomer. Requires Zn(2+) as cofactor.

It localises to the cytoplasm. It catalyses the reaction tRNA(Met) + L-methionine + ATP = L-methionyl-tRNA(Met) + AMP + diphosphate. In terms of biological role, is required not only for elongation of protein synthesis but also for the initiation of all mRNA translation through initiator tRNA(fMet) aminoacylation. This is Methionine--tRNA ligase from Bifidobacterium longum subsp. infantis (strain ATCC 15697 / DSM 20088 / JCM 1222 / NCTC 11817 / S12).